A 398-amino-acid chain; its full sequence is Leucine carboxyl methyltransferase 1 (398 aa).

Positions 1–11 (MSASQIPNLNT) are enriched in polar residues. Residues 1–54 (MSASQIPNLNTLRRGGGRGRLRGRGGFETGAPSEDRHGSRGLAAQDRVVQGTDN) form a disordered region. Residues arginine 97, glycine 123, aspartate 151, and 201 to 202 (DL) contribute to the S-adenosyl-L-methionine site. Over residues 208–218 (SGSATTSRSPS) the composition is skewed to low complexity. The tract at residues 208–232 (SGSATTSRSPSSPNPAEKDQPPCPL) is disordered. Position 246 (glutamate 246) interacts with S-adenosyl-L-methionine.

Belongs to the methyltransferase superfamily. LCMT family.

The enzyme catalyses [phosphatase 2A protein]-C-terminal L-leucine + S-adenosyl-L-methionine = [phosphatase 2A protein]-C-terminal L-leucine methyl ester + S-adenosyl-L-homocysteine. Methylates the carboxyl group of the C-terminal leucine residue of protein phosphatase 2A catalytic subunits to form alpha-leucine ester residues. In Aspergillus fumigatus (strain ATCC MYA-4609 / CBS 101355 / FGSC A1100 / Af293) (Neosartorya fumigata), this protein is Leucine carboxyl methyltransferase 1 (ppm1).